We begin with the raw amino-acid sequence, 248 residues long: Probable cyclic nucleotide phosphodiesterase CBUA0032 (248 aa).

Fe cation-binding residues include aspartate 13, histidine 15, aspartate 52, asparagine 82, histidine 152, histidine 191, and histidine 193. Residues histidine 15, aspartate 52, and asparagine 82–histidine 83 each bind AMP. Histidine 193 contacts AMP.

Belongs to the cyclic nucleotide phosphodiesterase class-III family. Requires Fe(2+) as cofactor.

The chain is Probable cyclic nucleotide phosphodiesterase CBUA0032 from Coxiella burnetii (strain RSA 493 / Nine Mile phase I).